The sequence spans 678 residues: Auxin response factor 7 (678 aa).

A DNA-binding region (TF-B3) is located at residues 128-230 (FCKTLTASDT…ELRVGVRRLM (103 aa)). Disordered stretches follow at residues 360–386 (AVSNSQPSPQPPARNKRARPPASNSIA) and 502–547 (GVGQ…SRQV). The 94-residue stretch at 548–641 (RSCTKVIMQG…EAKQLTPKSK (94 aa)) folds into the PB1 domain. The interval 643–678 (PIIGDAIKPNPNKQSPESDMPHSDLDSTAPVTDKDC) is disordered.

This sequence belongs to the ARF family. Homodimers and heterodimers. As to expression, expressed in roots, culms, leaves and young panicles.

The protein localises to the nucleus. Functionally, auxin response factors (ARFs) are transcriptional factors that bind specifically to the DNA sequence 5'-TGTCTC-3' found in the auxin-responsive promoter elements (AuxREs). This is Auxin response factor 7 (ARF7) from Oryza sativa subsp. japonica (Rice).